A 189-amino-acid polypeptide reads, in one-letter code: Phomopsin biosynthesis cluster protein D (189 aa).

Belongs to the oryJ family.

In terms of biological role, part of the gene cluster that mediates the biosynthesis of the phomopsins, a group of hexapeptide mycotoxins which infects lupins and causes lupinosis disease in livestock. The role of phomC within the phomopsins biosynthesis pathway has still to be determined. The pathway starts with the processing of the precursor phomA by several endopeptidases including kexin proteases as well as the cluster-specific S41 family peptidase phomP1 and the oligopeptidase phomG to produce 10 identical copies of the hexapeptide Tyr-Val-Ile-Pro-Ile-Asp. After being excised from the precursor peptide, the core peptides are cyclized and modified post-translationally by enzymes encoded within the gene cluster. The timing and order of proteolysis of the phomA precursor and PTMs are still unknown. Two tyrosinase-like enzymes, phomQ1 and phomQ2, catalyze the chlorination and hydroxylation of Tyr, respectively. PhomYb, is proposed to be involved in the construction of the macrocyclic structure. The other 4 ustYa family proteins may be involved in PTMs that generate the unique structure of phomopsin A. PhomYa is required for the hydroxylation of C-beta of Tyr. PhomYc, phomYd, and phomYe are responsible for the biosynthesis of 2,3-dehydroisoleucine (dIle), 2,3-dehydroaspartic acid (dAsp), and 3,4-dehydroproline (dPro), respectively. While dIle formation by phomYc is indispensable for the installation of dAsp by phomYd, the order of the other PTMs have not been elucidated yet. Most of the biosynthetic enzymes likely have broad substrate specificity, and thus, there might be a metabolic grid from a precursor to phomopsin A. The enzyme(s) responsible for the biosynthesis of 3,4-dehydrovaline (dVal) have also not been identified yet. Finally, phomM acts as an S-adenosylmethionine-dependent alpha-N-methyltransferase that catalyzes two successive N-methylation reactions, converting N-desmethyl-phomopsin A to phomopsin A and phomopsin A further to an N,N-dimethylated congener called phomopsin E. This Diaporthe leptostromiformis (Lupinosis disease fungus) protein is Phomopsin biosynthesis cluster protein D.